A 307-amino-acid chain; its full sequence is MGLSEKVEFKTLDGLVLRGFLYSARAKGPAIVMTPGFNFPVSLLYHEVALGFQAAGITALVYDPRSVGRSDGLPRSDINPAKQSEDFSDAITFLKTKPVVDPKRIALWGYSLSAAAALMAAGLDPRVKLVVAVCPAPVPYNFEAPGKRRKYLDLAIRDRESQARGKEPFYVQYIGDSEETALFDYRKQRGMEELEYDEVVENLTKIAPGFRNEVTIQTLRRLGSWSFADVPQRVGPTPVLQVFAVHEELEHIRKTQEAIWAGLTGPKERHTEDRGHMDVLTPDGHRFAHLVKVQVDFVLKNFAQRMR.

The protein belongs to the polyketide transferase af380 family.

Its function is as follows. Thiohydrolase; part of the gene cluster that mediates the biosynthesis of phaeospelide A, a fungal polyene macrolide with a 34-membered macrolactone ring and an all-trans conjugated hexaene structure. The HR-PKS ApmlA uses acetyl-CoA and malonyl-CoA as its starter and extender units, respectively, and provides the large carbon framework in phaeospelide via 16 cycles of polyketide chain elongation, which is the largest number identified in fungal iterative PKSs thus far. During round 1, the KR domain reduces beta -ketone to an L-oriented hydroxy group, while during later rounds, it provides hydroxy groups in the D-configuration. The characteristic conjugated hexaene moiety is built during the later rounds (10-15), when the KR and DH domains are at work but ER is off. Phylogenetic analysis of the DH domain suggests that a polyene formation is programmed in the DH domain. Finally, the mature ACP-tethered carbon chain is transferred to the serine residue of the thiohydrolase apmlB, followed by intramolecular macrolactonization, generating phaeospelide A. When one elongation cycle during rounds 7-9 is skipped, phaeospelide B is biosynthesized instead. The protein is Thiohydrolase apmlB of Arthrinium phaeospermum (Gymnosporium phaeospermum).